The chain runs to 324 residues: MAQPNQPTPQFQMAQIPLAAFFDNNESKTMLNSMNLRLNDMDLKLSLILELLATRLPDQRLPSIFTSPPQTVISEAPPQSFTPSATNSTSDKTSSSLKTELKTEDSDGDLDMEGEEDTEELFDNESQPSQRNQSPKETEVEDEKVLADGPFPEGAVKRAAEKAARSFQSTQPKVFAWQILRESVTDDELRNVQISLRTFHGETADHLLGRQLPKIRLVVEATMKYFKWDLLSTESQLSKAKLILSHLKNNAKVRNWTLREGRPNRVAPATPPVNVDLVWKRYLALLGPAGFTGILPNLPQNLCNGGTQSPSIPQIDPSLFKVDA.

The segment covering Ser67–Ala85 has biased composition (polar residues). The disordered stretch occupies residues Ser67 to Phe151. Residues Thr86 to Lys98 are compositionally biased toward low complexity. The span at Ser106 to Asp123 shows a compositional bias: acidic residues. Residues Asn124–Gln133 are compositionally biased toward polar residues. Basic and acidic residues predominate over residues Ser134 to Leu146.

In terms of assembly, multimer. May interact with mediator complex subunit mdt-29. As to expression, widely expressed, including in pharyngeal muscle cells and body wall muscle cells.

The protein localises to the nucleus. Putative transcription factor. Positive regulator of the lin-12/Notch signaling pathway. Binds to specific DNA sequences in regulatory elements. Involved in cell fate decisions that require cell-cell interactions, such as the anchor cell (AC) / ventral uterine (VU) precursor cell fate decision. Heterochronic protein which controls the choice of stage specific cell fates, including the larval L3 stage-specific fate of seam cells. Involved in regulating the temporal expression pattern of hunchback-like protein hbl-1, thereby playing a role in the progression between larval stages L2 and L3. This chain is Putative transcription factor sel-7, found in Caenorhabditis elegans.